A 524-amino-acid polypeptide reads, in one-letter code: MEEADFVQKDPTGRYIRYNDVLGRGAFKTVYKAFDEVEGIEVAWNLMSIEDVLQMPGQLDRLYSEVHLLNSLKHDNIIKLFYSWVDDHNKSINMITELFTSGSLTLYRKKHRKVDPKAIMNWARQILKGLHYLHSQTPPVIHRDLKCDNIFVNGNTGKVKIGDLGLAAVMQQPTARSVIGTPEFMAPELYEEEYNELVDIYSFGMCMLEMVTCEYPYRECRNQAQIYKKVTSGIKPQSLSKVDDPQVKQFIEKCLLPAPSRPTALELLKDQLLAVDGAKDSTLTASSNTTFKPAMPPQCEYRPMDVEYKKNTSVSICSSAKSSQECALLQTMEVQRVAESTEFKLSGERRDDVAASMALRIAGSSGQARKVDFDFNLKTDTARAVTGEMVEELDLSSHEVTVIAEMIDELIMKLKANRSLPNANSVYQSKDEEAGESMKSEISADYYHRVSSNEGSRLGCCCEAVESLLSSFLDSCSMVSNKQSEDLKTELNVIESQYNQSCQRLLRMKEEAIEKAKRKWMKLS.

The 258-residue stretch at 16 to 273 (IRYNDVLGRG…ALELLKDQLL (258 aa)) folds into the Protein kinase domain. Residues 96-99 (TELF) and Lys-146 each bind ATP. Catalysis depends on Asp-163, which acts as the Proton acceptor. Phosphoserine is present on Ser-477. Positions 480 to 523 (SNKQSEDLKTELNVIESQYNQSCQRLLRMKEEAIEKAKRKWMKL) form a coiled coil.

This sequence belongs to the protein kinase superfamily. Ser/Thr protein kinase family. WNK subfamily.

It carries out the reaction L-seryl-[protein] + ATP = O-phospho-L-seryl-[protein] + ADP + H(+). The catalysed reaction is L-threonyl-[protein] + ATP = O-phospho-L-threonyl-[protein] + ADP + H(+). Functionally, may regulate flowering time by modulating the photoperiod pathway. This Arabidopsis thaliana (Mouse-ear cress) protein is Probable serine/threonine-protein kinase WNK10 (WNK10).